The following is a 124-amino-acid chain: Urease subunit beta (124 aa).

The protein belongs to the urease beta subunit family. Heterotrimer of UreA (gamma), UreB (beta) and UreC (alpha) subunits. Three heterotrimers associate to form the active enzyme.

It localises to the cytoplasm. It carries out the reaction urea + 2 H2O + H(+) = hydrogencarbonate + 2 NH4(+). Its pathway is nitrogen metabolism; urea degradation; CO(2) and NH(3) from urea (urease route): step 1/1. This chain is Urease subunit beta, found in Halalkalibacterium halodurans (strain ATCC BAA-125 / DSM 18197 / FERM 7344 / JCM 9153 / C-125) (Bacillus halodurans).